Reading from the N-terminus, the 347-residue chain is GMP reductase (347 aa).

An NADP(+)-binding site is contributed by 108-131 (ADFEKTKQILDLNPALNFVCIDVA). Glycine 181 and glycine 183 together coordinate K(+). Catalysis depends on cysteine 186, which acts as the Thioimidate intermediate. NADP(+) is bound at residue 216 to 239 (IVSDGGCTTPGDVAKAFGGGADFV).

This sequence belongs to the IMPDH/GMPR family. GuaC type 1 subfamily. Homotetramer.

The enzyme catalyses IMP + NH4(+) + NADP(+) = GMP + NADPH + 2 H(+). Its function is as follows. Catalyzes the irreversible NADPH-dependent deamination of GMP to IMP. It functions in the conversion of nucleobase, nucleoside and nucleotide derivatives of G to A nucleotides, and in maintaining the intracellular balance of A and G nucleotides. This Escherichia coli O139:H28 (strain E24377A / ETEC) protein is GMP reductase.